We begin with the raw amino-acid sequence, 346 residues long: 3 beta-hydroxysteroid dehydrogenase/Delta 5--&gt;4-isomerase (346 aa).

Tyr-147 serves as the catalytic Proton acceptor. Lys-151 contributes to the NAD(+) binding site.

It belongs to the 3-beta-HSD family.

It carries out the reaction a 3beta-hydroxy-Delta(5)-steroid + NAD(+) = a 3-oxo-Delta(5)-steroid + NADH + H(+). It catalyses the reaction a 3-oxo-Delta(5)-steroid = a 3-oxo-Delta(4)-steroid. It functions in the pathway lipid metabolism; steroid biosynthesis. Functionally, catalyzes the oxidative conversion of Delta(5)-ene-3-beta-hydroxy steroid, and the oxidative conversion of ketosteroids. The 3-beta-HSD enzymatic system plays a crucial role in the biosynthesis of all classes of hormonal steroids. During viral infection, steroid production contributes to virulence by inhibiting the host inflammatory response. The protein is 3 beta-hydroxysteroid dehydrogenase/Delta 5--&gt;4-isomerase (OPG174) of Homo sapiens (Human).